The chain runs to 274 residues: Large ribosomal subunit protein uL2c (274 aa).

2 disordered regions span residues 1–22 (MAIH…DSQV) and 225–254 (PVDH…PALG).

It belongs to the universal ribosomal protein uL2 family. Part of the 50S ribosomal subunit.

Its subcellular location is the plastid. It localises to the chloroplast. The protein is Large ribosomal subunit protein uL2c (rpl2) of Sinapis alba (White mustard).